A 342-amino-acid chain; its full sequence is Protein-glutamate methylesterase/protein-glutamine glutaminase 4 (342 aa).

Positions asparagine 2–leucine 119 constitute a Response regulatory domain. At aspartate 53 the chain carries 4-aspartylphosphate. Residues proline 144–asparagine 337 enclose the CheB-type methylesterase domain. Active-site residues include serine 159, histidine 186, and aspartate 279.

Belongs to the CheB family. In terms of processing, phosphorylated by CheA. Phosphorylation of the N-terminal regulatory domain activates the methylesterase activity.

It localises to the cytoplasm. It carries out the reaction [protein]-L-glutamate 5-O-methyl ester + H2O = L-glutamyl-[protein] + methanol + H(+). It catalyses the reaction L-glutaminyl-[protein] + H2O = L-glutamyl-[protein] + NH4(+). Involved in chemotaxis. Part of a chemotaxis signal transduction system that modulates chemotaxis in response to various stimuli. Catalyzes the demethylation of specific methylglutamate residues introduced into the chemoreceptors (methyl-accepting chemotaxis proteins or MCP) by CheR. Also mediates the irreversible deamidation of specific glutamine residues to glutamic acid. In Burkholderia thailandensis (strain ATCC 700388 / DSM 13276 / CCUG 48851 / CIP 106301 / E264), this protein is Protein-glutamate methylesterase/protein-glutamine glutaminase 4.